A 185-amino-acid chain; its full sequence is MDIFTLLMIAAGLSMDNFAVSLASGCNPNIKIKDISKAALLFVAAHLVMFSLGWFGVSVIAERFDAYDHWISFGLLVFIGLRMIKEAAAKKGQQECVNITETFSRLLLIALATSMDALAVGISLSLAGVHFVLSVAAISFFVLITTFFGFKIGGKLGDKLGIKAEIFGGIVLIGIALKILLDAMM.

6 helical membrane passes run 3-23, 40-60, 64-84, 102-122, 124-144, and 165-185; these read IFTL…VSLA, LLFV…VSVI, FDAY…LRMI, TFSR…AVGI, LSLA…FVLI, and EIFG…DAMM.

The protein belongs to the MntP (TC 9.B.29) family.

The protein resides in the cell inner membrane. In terms of biological role, probably functions as a manganese efflux pump. The protein is Putative manganese efflux pump MntP of Elusimicrobium minutum (strain Pei191).